The sequence spans 285 residues: RNase adapter protein RapZ (285 aa).

8-15 (GRSGSGKS) provides a ligand contact to ATP. 56–59 (DVRN) provides a ligand contact to GTP. Residues 266 to 285 (RSRGKNVQSRHRTLEKRKPS) are RNA-binding.

The protein belongs to the RapZ-like family. RapZ subfamily. Homotrimer.

In terms of biological role, modulates the synthesis of GlmS, by affecting the processing and stability of the regulatory small RNA GlmZ. When glucosamine-6-phosphate (GlcN6P) concentrations are high in the cell, RapZ binds GlmZ and targets it to cleavage by RNase E. Consequently, GlmZ is inactivated and unable to activate GlmS synthesis. Under low GlcN6P concentrations, RapZ is sequestered and inactivated by an other regulatory small RNA, GlmY, preventing GlmZ degradation and leading to synthesis of GlmS. This Pectobacterium atrosepticum (strain SCRI 1043 / ATCC BAA-672) (Erwinia carotovora subsp. atroseptica) protein is RNase adapter protein RapZ.